The chain runs to 410 residues: LanC-like protein GCR2 (410 aa).

3 residues coordinate Zn(2+): cysteine 283, cysteine 328, and histidine 329.

This sequence belongs to the LanC-like protein family. May interact (via C-terminus) with GPA1.

In terms of biological role, may play a role in abscisic acid (ABA) signaling. This Arabidopsis thaliana (Mouse-ear cress) protein is LanC-like protein GCR2 (GCR2).